A 98-amino-acid chain; its full sequence is Acylphosphatase (98 aa).

Residues 10–96 (ARLLRIRGRV…TDGAGFDCLP (87 aa)) enclose the Acylphosphatase-like domain. Active-site residues include Arg-25 and Asn-43.

The protein belongs to the acylphosphatase family.

The catalysed reaction is an acyl phosphate + H2O = a carboxylate + phosphate + H(+). The chain is Acylphosphatase (acyP) from Azoarcus sp. (strain BH72).